Consider the following 824-residue polypeptide: Molybdenum cofactor sulfurase (824 aa).

Lys274 is subject to N6-(pyridoxal phosphate)lysine. The active site involves Cys433. The MOSC domain occupies 655–822 (CSSSKYRSCT…LQVGQQVYPS (168 aa)).

This sequence belongs to the class-V pyridoxal-phosphate-dependent aminotransferase family. MOCOS subfamily. Requires pyridoxal 5'-phosphate as cofactor.

The catalysed reaction is Mo-molybdopterin + L-cysteine + AH2 = thio-Mo-molybdopterin + L-alanine + A + H2O. Its pathway is cofactor biosynthesis; molybdopterin biosynthesis. Its function is as follows. Sulfurates the molybdenum cofactor. Sulfation of molybdenum is essential for xanthine dehydrogenase (XDH) and aldehyde oxidase (ADO) enzymes in which molybdenum cofactor is liganded by 1 oxygen and 1 sulfur atom in active form. In Oryza sativa subsp. japonica (Rice), this protein is Molybdenum cofactor sulfurase (MCSU3).